The primary structure comprises 132 residues: Small ribosomal subunit protein uS9 (132 aa).

This sequence belongs to the universal ribosomal protein uS9 family.

This chain is Small ribosomal subunit protein uS9, found in Blochmanniella pennsylvanica (strain BPEN).